A 618-amino-acid polypeptide reads, in one-letter code: Mitochondrial Rho GTPase 2 (618 aa).

Topologically, residues 1 to 592 are cytoplasmic; that stretch reads MRRDVRILLL…ELHPSSFWLR (592 aa). Residues 2–168 enclose the Miro 1 domain; the sequence is RRDVRILLLG…FYYAQKAVLH (167 aa). Gly16, Lys17, Thr18, and Ser19 together coordinate GTP. Residue Thr18 coordinates Mg(2+). Residues Pro35 and Asp57 each coordinate Mg(2+). Ser59 contacts GTP. Residue Lys96 forms a Glycyl lysine isopeptide (Lys-Gly) (interchain with G-Cter in ubiquitin) linkage. The GTP site is built by Asn118, Lys119, Asp121, Ala149, and Lys150. Lys119 is covalently cross-linked (Glycyl lysine isopeptide (Lys-Gly) (interchain with G-Cter in ubiquitin)). Lys164 is covalently cross-linked (Glycyl lysine isopeptide (Lys-Gly) (interchain with G-Cter in ubiquitin)). 2 consecutive EF-hand domains span residues 184-219 and 304-339; these read ACAQ…CFGH and LGYQ…FPAA. Residues Asp197, Asp199, Asp201, Glu208, Asp317, Asp319, Asp321, and Glu328 each coordinate Ca(2+). The 163-residue stretch at 414-576 folds into the Miro 2 domain; that stretch reads RSVLLCKVVG…FTQLATMAAF (163 aa). Gly426, Gly428, Lys429, Ser430, and Ala431 together coordinate GTP. GDP contacts are provided by Gly426, Gly428, Lys429, Ser430, and Ala431. Residue Ser430 participates in Mg(2+) binding. Mg(2+) is bound at residue Glu471. GTP contacts are provided by Lys525, Asp527, and Cys556. Lys525, Asp527, and Cys556 together coordinate GDP. A helical; Anchor for type IV membrane protein transmembrane segment spans residues 593 to 615; it reads GLLGVVGAAVAAVLSFSLYRVLV. Topologically, residues 616 to 618 are mitochondrial intermembrane; that stretch reads KSQ.

Belongs to the mitochondrial Rho GTPase family. In terms of assembly, homodimer. Interacts with the kinesin-binding proteins TRAK1/OIP106 and TRAK2/GRIF1, forming a link between mitochondria and the trafficking apparatus of the microtubules. Interacts with ARMCX3. Found in a complex with KIF5B, OGT, RHOT1 and TRAK1. Ubiquitinated by PRKN in a PINK1-dependent manner, leading to its degradation. Ubiquitously expressed. Highly expressed in heart, liver, skeletal muscle, kidney and pancreas.

It is found in the mitochondrion outer membrane. It catalyses the reaction GTP + H2O = GDP + phosphate + H(+). It carries out the reaction ATP + H2O = ADP + phosphate + H(+). The enzyme catalyses UTP + H2O = UDP + phosphate + H(+). Functionally, atypical mitochondrial nucleoside-triphosphatase (NTPase) involved in mitochondrial trafficking. Probably involved in control of anterograde transport of mitochondria and their subcellular distribution. Can hydrolyze GTP. Can hydrolyze ATP and UTP. The protein is Mitochondrial Rho GTPase 2 (RHOT2) of Homo sapiens (Human).